Here is a 348-residue protein sequence, read N- to C-terminus: UDP-3-O-acylglucosamine N-acyltransferase (348 aa).

The active-site Proton acceptor is His-241.

Belongs to the transferase hexapeptide repeat family. LpxD subfamily. As to quaternary structure, homotrimer.

It carries out the reaction a UDP-3-O-[(3R)-3-hydroxyacyl]-alpha-D-glucosamine + a (3R)-hydroxyacyl-[ACP] = a UDP-2-N,3-O-bis[(3R)-3-hydroxyacyl]-alpha-D-glucosamine + holo-[ACP] + H(+). Its pathway is bacterial outer membrane biogenesis; LPS lipid A biosynthesis. Functionally, catalyzes the N-acylation of UDP-3-O-acylglucosamine using 3-hydroxyacyl-ACP as the acyl donor. Is involved in the biosynthesis of lipid A, a phosphorylated glycolipid that anchors the lipopolysaccharide to the outer membrane of the cell. The protein is UDP-3-O-acylglucosamine N-acyltransferase of Neisseria meningitidis serogroup B (strain ATCC BAA-335 / MC58).